Reading from the N-terminus, the 126-residue chain is Histone H2B type 2-E (126 aa).

Residues 1-12 show a composition bias toward low complexity; sequence MPEPAKSAPAPK. The segment at 1–32 is disordered; sequence MPEPAKSAPAPKKGSKKAVTKAQKKDGKKRKR. An N-acetylproline modification is found at Pro-2. Glu-3 carries the ADP-ribosyl glutamic acid modification. The residue at position 6 (Lys-6) is an N6-(2-hydroxyisobutyryl)lysine; alternate. The residue at position 6 (Lys-6) is an N6-(beta-hydroxybutyryl)lysine; alternate. Lys-6 is subject to N6-acetyllysine; alternate. The residue at position 6 (Lys-6) is an N6-butyryllysine; alternate. Lys-6 is subject to N6-crotonyllysine; alternate. N6-lactoyllysine; alternate is present on Lys-6. Lys-6 is covalently cross-linked (Glycyl lysine isopeptide (Lys-Gly) (interchain with G-Cter in SUMO2); alternate). Ser-7 is modified (ADP-ribosylserine). The residue at position 12 (Lys-12) is an N6-(beta-hydroxybutyryl)lysine; alternate. 2 positions are modified to N6-acetyllysine; alternate: Lys-12 and Lys-13. N6-crotonyllysine; alternate is present on residues Lys-12 and Lys-13. Lys-12 carries the N6-lactoyllysine; alternate modification. An N6-(2-hydroxyisobutyryl)lysine; alternate modification is found at Lys-13. Ser-15 is modified (phosphoserine; by STK4/MST1). An N6-acetyllysine; alternate mark is found at Lys-16, Lys-17, Lys-21, and Lys-24. N6-crotonyllysine; alternate occurs at positions 16, 17, 21, and 24. Lys-16, Lys-17, Lys-21, and Lys-24 each carry N6-lactoyllysine; alternate. The residue at position 17 (Lys-17) is an N6-glutaryllysine; alternate. Residues Lys-21 and Lys-24 each carry the N6-(2-hydroxyisobutyryl)lysine; alternate modification. N6-(beta-hydroxybutyryl)lysine; alternate is present on Lys-21. At Lys-21 the chain carries N6-butyryllysine; alternate. Lys-21 is covalently cross-linked (Glycyl lysine isopeptide (Lys-Gly) (interchain with G-Cter in SUMO2); alternate). Lys-25 is modified (N6-(2-hydroxyisobutyryl)lysine). Lys-35 is modified (N6-(2-hydroxyisobutyryl)lysine; alternate). An N6-(beta-hydroxybutyryl)lysine; alternate modification is found at Lys-35. The residue at position 35 (Lys-35) is an N6-crotonyllysine; alternate. Residue Lys-35 is modified to N6-glutaryllysine; alternate. Position 35 is an N6-succinyllysine; alternate (Lys-35). Lys-35 is covalently cross-linked (Glycyl lysine isopeptide (Lys-Gly) (interchain with G-Cter in ubiquitin); alternate). Glu-36 bears the PolyADP-ribosyl glutamic acid mark. The residue at position 37 (Ser-37) is a Phosphoserine; by AMPK. 3 positions are modified to N6-(2-hydroxyisobutyryl)lysine; alternate: Lys-44, Lys-47, and Lys-58. Lys-44 bears the N6-lactoyllysine; alternate mark. Residues Lys-44 and Lys-47 each carry the N6-glutaryllysine; alternate modification. Lys-47 carries the N6-methyllysine; alternate modification. Lys-58 carries the N6,N6-dimethyllysine; alternate modification. Residue Arg-80 is modified to Dimethylated arginine. Lys-86 is modified (N6-(2-hydroxyisobutyryl)lysine; alternate). The residue at position 86 (Lys-86) is an N6-acetyllysine; alternate. N6-lactoyllysine; alternate is present on Lys-86. N6,N6,N6-trimethyllysine; alternate is present on Lys-86. 2 positions are modified to omega-N-methylarginine: Arg-87 and Arg-93. Position 109 is an N6-(2-hydroxyisobutyryl)lysine; alternate (Lys-109). The residue at position 109 (Lys-109) is an N6-lactoyllysine; alternate. Position 109 is an N6-glutaryllysine; alternate (Lys-109). Residue Lys-109 is modified to N6-methyllysine; alternate. O-linked (GlcNAc) serine glycosylation occurs at Ser-113. At Thr-116 the chain carries Phosphothreonine. 2 positions are modified to N6-(2-hydroxyisobutyryl)lysine; alternate: Lys-117 and Lys-121. N6-(beta-hydroxybutyryl)lysine; alternate is present on Lys-117. N6-lactoyllysine; alternate is present on residues Lys-117 and Lys-121. N6-glutaryllysine; alternate is present on residues Lys-117 and Lys-121. 2 positions are modified to N6-succinyllysine; alternate: Lys-117 and Lys-121. Lys-117 is subject to N6-methylated lysine; alternate. Residue Lys-121 forms a Glycyl lysine isopeptide (Lys-Gly) (interchain with G-Cter in ubiquitin); alternate linkage.

The protein belongs to the histone H2B family. As to quaternary structure, the nucleosome is a histone octamer containing two molecules each of H2A, H2B, H3 and H4 assembled in one H3-H4 heterotetramer and two H2A-H2B heterodimers. The octamer wraps approximately 147 bp of DNA. Monoubiquitination at Lys-35 (H2BK34Ub) by the MSL1/MSL2 dimer is required for histone H3 'Lys-4' (H3K4me) and 'Lys-79' (H3K79me) methylation and transcription activation at specific gene loci, such as HOXA9 and MEIS1 loci. Similarly, monoubiquitination at Lys-121 (H2BK120Ub) by the RNF20/40 complex gives a specific tag for epigenetic transcriptional activation and is also prerequisite for histone H3 'Lys-4' and 'Lys-79' methylation. It also functions cooperatively with the FACT dimer to stimulate elongation by RNA polymerase II. H2BK120Ub also acts as a regulator of mRNA splicing: deubiquitination by USP49 is required for efficient cotranscriptional splicing of a large set of exons. Post-translationally, phosphorylated on Ser-15 (H2BS14ph) by STK4/MST1 during apoptosis; which facilitates apoptotic chromatin condensation. Also phosphorylated on Ser-15 in response to DNA double strand breaks (DSBs), and in correlation with somatic hypermutation and immunoglobulin class-switch recombination. Phosphorylation at Ser-37 (H2BS36ph) by AMPK in response to stress promotes transcription. In terms of processing, ADP-ribosylated by PARP1 or PARP2 on Ser-7 (H2BS6ADPr) in response to DNA damage. H2BS6ADPr promotes recruitment of CHD1L. Mono-ADP-ribosylated on Glu-3 (H2BE2ADPr) by PARP3 in response to single-strand breaks. Poly ADP-ribosylation on Glu-36 (H2BE35ADPr) by PARP1 regulates adipogenesis: it inhibits phosphorylation at Ser-37 (H2BS36ph), thereby blocking expression of pro-adipogenetic genes. Crotonylation (Kcr) is specifically present in male germ cells and marks testis-specific genes in post-meiotic cells, including X-linked genes that escape sex chromosome inactivation in haploid cells. Crotonylation marks active promoters and enhancers and confers resistance to transcriptional repressors. It is also associated with post-meiotically activated genes on autosomes. Post-translationally, glcNAcylation at Ser-113 promotes monoubiquitination of Lys-121. It fluctuates in response to extracellular glucose, and associates with transcribed genes. In terms of processing, lactylated in macrophages by EP300/P300 by using lactoyl-CoA directly derived from endogenous or exogenous lactate, leading to stimulates gene transcription.

Its subcellular location is the nucleus. The protein resides in the chromosome. In terms of biological role, core component of nucleosome. Nucleosomes wrap and compact DNA into chromatin, limiting DNA accessibility to the cellular machineries which require DNA as a template. Histones thereby play a central role in transcription regulation, DNA repair, DNA replication and chromosomal stability. DNA accessibility is regulated via a complex set of post-translational modifications of histones, also called histone code, and nucleosome remodeling. Has broad antibacterial activity. May contribute to the formation of the functional antimicrobial barrier of the colonic epithelium, and to the bactericidal activity of amniotic fluid. This chain is Histone H2B type 2-E, found in Pongo abelii (Sumatran orangutan).